We begin with the raw amino-acid sequence, 142 residues long: NTF2-related export protein 2 (142 aa).

The region spanning 17-136 (AAEEFVNIYY…WKIASDCFRF (120 aa)) is the NTF2 domain.

Associates with NXF1, NXF2, NXF3 and NXF5.

The protein localises to the nucleus. It is found in the cytoplasm. Its function is as follows. Regulator of protein export for NES-containing proteins. Also plays a role in mRNA nuclear export. The polypeptide is NTF2-related export protein 2 (NXT2) (Bos taurus (Bovine)).